We begin with the raw amino-acid sequence, 397 residues long: Homocysteine-responsive endoplasmic reticulum-resident ubiquitin-like domain member 2 protein (397 aa).

A Ubiquitin-like domain is found at 10 to 89; sequence VTLVIKAPNQ…HMVHLVCASR (80 aa). 2 disordered regions span residues 87–166 and 210–246; these read ASRS…MQGG and APSP…PANP. 2 stretches are compositionally biased toward low complexity: residues 88-123 and 210-220; these read SRSP…STPS and APSPSLSAGPA. The helical transmembrane segment at 293–313 threads the bilayer; it reads FVMVIGAMLLVYLHQAGWFPF. The disordered stretch occupies residues 344–373; it reads DEGIEDDEGDSGEEGPDDPMNPGPHQPGFL. Over residues 345 to 360 the composition is skewed to acidic residues; it reads EGIEDDEGDSGEEGPD.

Its subcellular location is the membrane. In terms of biological role, could be involved in the unfolded protein response (UPR) pathway. The chain is Homocysteine-responsive endoplasmic reticulum-resident ubiquitin-like domain member 2 protein (herpud2) from Danio rerio (Zebrafish).